A 59-amino-acid polypeptide reads, in one-letter code: Conotoxin mr5a (59 aa).

The N-terminal stretch at 1–22 (MRCLPVFVILLLLIASAPSVDA) is a signal peptide. A propeptide spanning residues 23–48 (RPKTKDDMPLASFHDNAKRILQILQD) is cleaved from the precursor.

Contains 2 disulfide bonds that can be either 'C1-C3, C2-C4' or 'C1-C4, C2-C3', since these disulfide connectivities have been observed for conotoxins with cysteine framework V (for examples, see AC P0DQQ7 and AC P81755). Expressed by the venom duct.

The protein resides in the secreted. The chain is Conotoxin mr5a from Conus marmoreus (Marble cone).